The primary structure comprises 554 residues: Flavin-dependent halogenase ascD (554 aa).

Residues glycine 15, glycine 18, and glutamate 48 each coordinate FAD. The chloride site is built by serine 331 and glycine 332. Valine 333 lines the FAD pocket.

This sequence belongs to the flavin-dependent halogenase family.

It carries out the reaction ilicicolin B + FADH2 + chloride + O2 = ilicicolin A + FAD + 2 H2O + H(+). It participates in secondary metabolite biosynthesis; terpenoid biosynthesis. In terms of biological role, flavin-dependent halogenase; part of the asc-1 gene cluster that mediates the biosynthesis of both ascochlorin and ascofuranone, a strong inhibitor of cyanide-insensitive alternative oxidases and a promising drug candidate against African trypanosomiasis. The first step in the pathway is performed by the non-reducing polyketide synthase ascC that produces orsellinic acid by condensing acetyl-CoA with 3 malonyl-CoA units. Orsellinic acid is then prenylated by the prenyltransferase ascA to yield ilicicolinic acid B. Ilicicolinic acid B is further reduced to ilicicolin B by the reductase ascB. The halogenase ascD then chlorinates ilicicolin B to produce ilicicolin A which is converted to ilicicolin A epoxide by the cytochrome P450 monooxygenase ascE that catalyzes stereoselective epoxidation of the terminal double bond of the prenyl group. Ilicicolin A epoxide is the last common precursor for the biosynthesis of ascofuranone and ascochlorin. The terpene cyclase ascF produces a monocyclic terpene, and the cyclization reaction is proposed to be initiated by protonation of the terminal epoxide of ilicicolin A epoxide to generate a monocyclic tertiarycation, which is followed by a series of hydride and methyl shifts with abstraction of proton, leading to the formation of the (14S,15R,19R)-trimethylcyclohexanone ring structure of ilicicolin C, which is finally reduced to ascochlorin by the dehydrogenase ascG. On the other hand, ilicicolin A epoxide is hydroxylated by the cytochrome P450 monooxygenase ascH, and the resultant product is cyclized by the terpene cyclase ascI to ascofuranol via protonation-initiated epoxide ring opening, which facilitates the 6-endo-tet cyclization to form the tetrahy-drofuran ring. Finally, ascofuranol is oxidized into ascofuranone by ascJ. In Acremonium egyptiacum (Oospora egyptiaca), this protein is Flavin-dependent halogenase ascD.